The primary structure comprises 213 residues: Riboflavin/roseoflavin transporter RibM (213 aa).

The next 5 helical transmembrane spans lie at 15–35, 38–58, 107–129, 136–158, and 171–193; these read HIIW…ALGF, SLWT…AFYG, IAAA…SLSW, YIFV…FWFA, and FANG…LWGM.

The protein belongs to the nicotinamide ribonucleoside (NR) uptake permease (TC 4.B.1) family.

The protein localises to the cell membrane. Functionally, transports riboflavin and roseoflavin. Can also transport FMN and FAD. May confer roseoflavin resistance to S.davawensis, which naturally produces this antibiotic during stationary growth phase. This is Riboflavin/roseoflavin transporter RibM from Streptomyces davaonensis (strain DSM 101723 / JCM 4913 / KCC S-0913 / 768).